The sequence spans 322 residues: RNA pseudouridine synthase 1 (322 aa).

D120 is an active-site residue.

This sequence belongs to the pseudouridine synthase RluA family.

The enzyme catalyses a uridine in RNA = a pseudouridine in RNA. This chain is RNA pseudouridine synthase 1, found in Arabidopsis thaliana (Mouse-ear cress).